The sequence spans 250 residues: uncharacterized protein (250 aa).

The N-terminal stretch at 1 to 17 (MRTLVLLSSVAILSTLA) is a signal peptide. N-linked (GlcNAc...) asparagine glycosylation is found at asparagine 48, asparagine 159, asparagine 223, and asparagine 239.

Its subcellular location is the secreted. This is an uncharacterized protein from Caenorhabditis elegans.